We begin with the raw amino-acid sequence, 338 residues long: Anthranilate phosphoribosyltransferase (338 aa).

5-phospho-alpha-D-ribose 1-diphosphate is bound by residues G83, 86 to 87 (GD), S91, 93 to 96 (NCST), 111 to 119 (KHGNRAVSS), and A123. G83 provides a ligand contact to anthranilate. S95 is a Mg(2+) binding site. N114 contacts anthranilate. R169 provides a ligand contact to anthranilate. Residues D228 and E229 each contribute to the Mg(2+) site.

It belongs to the anthranilate phosphoribosyltransferase family. In terms of assembly, homodimer. The cofactor is Mg(2+).

The enzyme catalyses N-(5-phospho-beta-D-ribosyl)anthranilate + diphosphate = 5-phospho-alpha-D-ribose 1-diphosphate + anthranilate. The protein operates within amino-acid biosynthesis; L-tryptophan biosynthesis; L-tryptophan from chorismate: step 2/5. In terms of biological role, catalyzes the transfer of the phosphoribosyl group of 5-phosphorylribose-1-pyrophosphate (PRPP) to anthranilate to yield N-(5'-phosphoribosyl)-anthranilate (PRA). In Nitratidesulfovibrio vulgaris (strain DSM 19637 / Miyazaki F) (Desulfovibrio vulgaris), this protein is Anthranilate phosphoribosyltransferase.